The following is a 315-amino-acid chain: Ferrochelatase (315 aa).

Fe cation-binding residues include His-193 and Glu-273.

This sequence belongs to the ferrochelatase family.

It localises to the cytoplasm. The catalysed reaction is heme b + 2 H(+) = protoporphyrin IX + Fe(2+). It participates in porphyrin-containing compound metabolism; protoheme biosynthesis; protoheme from protoporphyrin-IX: step 1/1. In terms of biological role, catalyzes the ferrous insertion into protoporphyrin IX. The protein is Ferrochelatase of Wolbachia pipientis wMel.